Here is a 299-residue protein sequence, read N- to C-terminus: Nucleotide-binding protein SCO1952 (299 aa).

23-30 (GMSGAGRS) is an ATP binding site. 74 to 77 (DVRG) is a binding site for GTP.

This sequence belongs to the RapZ-like family.

Functionally, displays ATPase and GTPase activities. The protein is Nucleotide-binding protein SCO1952 of Streptomyces coelicolor (strain ATCC BAA-471 / A3(2) / M145).